A 1171-amino-acid polypeptide reads, in one-letter code: Kinesin-like protein GA13060 (1171 aa).

Residues 1-24 form a disordered region; that stretch reads MASSISRNGGFCGALQRAPPPMPP. The Kinesin motor domain occupies 40 to 400; sequence KVKVMLRVSD…IQIASRIHRL (361 aa). Disordered stretches follow at residues 737 to 774, 798 to 820, 932 to 955, 1043 to 1099, and 1124 to 1143; these read LLGQ…GSRD, LVAS…SQRS, PAYR…SLPS, TSSE…QRHR, and RHSH…EGNG. The span at 805-816 shows a compositional bias: basic residues; sequence SSHHQHQHHRPS. A compositionally biased stretch (polar residues) spans 1043–1059; sequence TSSEAYDSGHDSNSTPR. Positions 1124–1139 are enriched in basic residues; that stretch reads RHSHGVGGHKKHRHRH.

The protein belongs to the TRAFAC class myosin-kinesin ATPase superfamily. Kinesin family. KIF26 subfamily.

It is found in the cytoplasm. The protein localises to the cytoskeleton. The chain is Kinesin-like protein GA13060 from Drosophila pseudoobscura pseudoobscura (Fruit fly).